We begin with the raw amino-acid sequence, 185 residues long: Ribosome-recycling factor (185 aa).

The protein belongs to the RRF family.

The protein resides in the cytoplasm. Responsible for the release of ribosomes from messenger RNA at the termination of protein biosynthesis. May increase the efficiency of translation by recycling ribosomes from one round of translation to another. This chain is Ribosome-recycling factor, found in Shewanella sp. (strain W3-18-1).